We begin with the raw amino-acid sequence, 256 residues long: Imidazole glycerol phosphate synthase subunit HisF (256 aa).

Catalysis depends on residues D11 and D130.

This sequence belongs to the HisA/HisF family. As to quaternary structure, heterodimer of HisH and HisF.

It is found in the cytoplasm. It catalyses the reaction 5-[(5-phospho-1-deoxy-D-ribulos-1-ylimino)methylamino]-1-(5-phospho-beta-D-ribosyl)imidazole-4-carboxamide + L-glutamine = D-erythro-1-(imidazol-4-yl)glycerol 3-phosphate + 5-amino-1-(5-phospho-beta-D-ribosyl)imidazole-4-carboxamide + L-glutamate + H(+). It participates in amino-acid biosynthesis; L-histidine biosynthesis; L-histidine from 5-phospho-alpha-D-ribose 1-diphosphate: step 5/9. IGPS catalyzes the conversion of PRFAR and glutamine to IGP, AICAR and glutamate. The HisF subunit catalyzes the cyclization activity that produces IGP and AICAR from PRFAR using the ammonia provided by the HisH subunit. The sequence is that of Imidazole glycerol phosphate synthase subunit HisF from Prochlorococcus marinus (strain NATL1A).